A 220-amino-acid polypeptide reads, in one-letter code: MRLILLGAPGAGKGTQANFIKEKFGIPQISTGDMLRAAVKAGSPLGVEAKGYMDAGKLVPDALIIGLVKERLKESDCANGYLFDGFPRTIAQADAMKEAGVAIDYVLEIDVPFSEIVERMSGRRTHAASGRTYHVKFNPPKVEGQDDVTGEPLIQRDDDKEETVKKRLEVYEAQTKPLITYYGDWAQRGEENGLKAPQYRKISGLGSVEEIRERAFEALK.

10 to 15 (GAGKGT) serves as a coordination point for ATP. Residues 30-59 (STGDMLRAAVKAGSPLGVEAKGYMDAGKLV) form an NMP region. Residues Thr-31, Arg-36, 57–59 (KLV), 85–88 (GFPR), and Gln-92 contribute to the AMP site. The interval 122 to 159 (GRRTHAASGRTYHVKFNPPKVEGQDDVTGEPLIQRDDD) is LID. Residues Arg-123 and 132–133 (TY) each bind ATP. Residues Arg-156 and Arg-167 each contribute to the AMP site. ATP is bound at residue Gly-206.

The protein belongs to the adenylate kinase family. In terms of assembly, monomer.

The protein resides in the cytoplasm. The catalysed reaction is AMP + ATP = 2 ADP. Its pathway is purine metabolism; AMP biosynthesis via salvage pathway; AMP from ADP: step 1/1. Functionally, catalyzes the reversible transfer of the terminal phosphate group between ATP and AMP. Plays an important role in cellular energy homeostasis and in adenine nucleotide metabolism. This chain is Adenylate kinase, found in Burkholderia vietnamiensis (strain G4 / LMG 22486) (Burkholderia cepacia (strain R1808)).